The sequence spans 441 residues: N-acetyl-S-(2-succino)cysteine monooxygenase (441 aa).

Positions 59, 96, 146, 150, 220, and 221 each coordinate FMN.

The protein belongs to the NtaA/SnaA/DszA monooxygenase family. In terms of assembly, homodimer. FMN is required as a cofactor.

The catalysed reaction is N-acetyl-S-(2-succino)-L-cysteine + NADH + O2 + H(+) = N-acetyl-L-cysteine + oxaloacetate + NAD(+) + H2O. The protein operates within amino-acid biosynthesis; L-cysteine biosynthesis. Catalyzes the oxidative cleavage of the C-S bond of N-acetyl-S-(2-succino)cysteine, forming oxaloacetate and N-acetylcysteine (NAC). Is involved in a S-(2-succino)cysteine (2SC) degradation pathway that allows B.subtilis to grow on 2SC as a sole sulfur source, via its metabolization to cysteine. Shows almost no activity on S-succinylglutathione and 2SC. The protein is N-acetyl-S-(2-succino)cysteine monooxygenase of Bacillus subtilis (strain 168).